A 751-amino-acid chain; its full sequence is Cyanobacterial phytochrome B (751 aa).

Cysteine 17 provides a ligand contact to a tetrapyrrole. Residues 22–511 (IHIPGLIQPH…RSAIIGIVLQ (490 aa)) are chromophore binding domain. The region spanning 152–320 (TTTEISQILA…MTSVEMSAKE (169 aa)) is the GAF domain. The Histidine kinase domain maps to 536-751 (IASHDLKEPL…STFYFTLQDV (216 aa)). Residue histidine 539 is modified to Phosphohistidine; by autocatalysis.

This sequence in the N-terminal section; belongs to the phytochrome family. Contains one covalently linked tetrapyrrole chromophore.

It catalyses the reaction ATP + protein L-histidine = ADP + protein N-phospho-L-histidine.. Photoreceptor which exists in two forms that are reversibly interconvertible by light: the R form that absorbs maximally in the red region of the spectrum and the FR form that absorbs maximally in the far-red region. This Nostoc sp. (strain PCC 7120 / SAG 25.82 / UTEX 2576) protein is Cyanobacterial phytochrome B (bphB).